The primary structure comprises 419 residues: Enolase (419 aa).

Q161 contributes to the (2R)-2-phosphoglycerate binding site. The active-site Proton donor is E205. Residues D240, E283, and D309 each contribute to the Mg(2+) site. Residues K334, R363, S364, and K385 each coordinate (2R)-2-phosphoglycerate. Residue K334 is the Proton acceptor of the active site.

This sequence belongs to the enolase family. It depends on Mg(2+) as a cofactor.

Its subcellular location is the cytoplasm. It localises to the secreted. It is found in the cell surface. The enzyme catalyses (2R)-2-phosphoglycerate = phosphoenolpyruvate + H2O. The protein operates within carbohydrate degradation; glycolysis; pyruvate from D-glyceraldehyde 3-phosphate: step 4/5. Catalyzes the reversible conversion of 2-phosphoglycerate (2-PG) into phosphoenolpyruvate (PEP). It is essential for the degradation of carbohydrates via glycolysis. This chain is Enolase, found in Saccharolobus islandicus (strain Y.G.57.14 / Yellowstone #1) (Sulfolobus islandicus).